The primary structure comprises 66 residues: Large ribosomal subunit protein bL32 (66 aa).

The protein belongs to the bacterial ribosomal protein bL32 family.

This chain is Large ribosomal subunit protein bL32, found in Leptospira interrogans serogroup Icterohaemorrhagiae serovar copenhageni (strain Fiocruz L1-130).